The following is a 126-amino-acid chain: Large ribosomal subunit protein bL12 (126 aa).

The protein belongs to the bacterial ribosomal protein bL12 family. Homodimer. Part of the ribosomal stalk of the 50S ribosomal subunit. Forms a multimeric L10(L12)X complex, where L10 forms an elongated spine to which 2 to 4 L12 dimers bind in a sequential fashion. Binds GTP-bound translation factors.

Forms part of the ribosomal stalk which helps the ribosome interact with GTP-bound translation factors. Is thus essential for accurate translation. This chain is Large ribosomal subunit protein bL12, found in Geobacter sp. (strain M21).